The chain runs to 1171 residues: ATP-dependent helicase/deoxyribonuclease subunit B (1171 aa).

Residues 1 to 390 form the UvrD-like helicase ATP-binding domain; that stretch reads MSLRFVIGRA…HPLVECIRSA (390 aa). 8 to 15 contributes to the ATP binding site; it reads GRAGSGKS. The UvrD-like helicase C-terminal domain maps to 281-587; the sequence is MEQPRFHSPA…QFANIPPSLD (307 aa). [4Fe-4S] cluster contacts are provided by cysteine 805, cysteine 1129, cysteine 1132, and cysteine 1138.

It belongs to the helicase family. AddB/RexB type 1 subfamily. Heterodimer of AddA and AddB. Mg(2+) serves as cofactor. The cofactor is [4Fe-4S] cluster.

The heterodimer acts as both an ATP-dependent DNA helicase and an ATP-dependent, dual-direction single-stranded exonuclease. Recognizes the chi site generating a DNA molecule suitable for the initiation of homologous recombination. The AddB subunit has 5' -&gt; 3' nuclease activity but not helicase activity. The chain is ATP-dependent helicase/deoxyribonuclease subunit B from Bacillus cereus (strain B4264).